Here is a 206-residue protein sequence, read N- to C-terminus: MVSGSGICAKRVVVDARHHMLGRLASVVAKDLLNGQNIVVVRCEEICLSGGLVRQKMKYMRFLRKRMNTKPSHGPIHFRAPSKIFWRTVRGMIPHKTKRGANALARLKVFEGVPTPYDKIKRMVVPDALKVLRLQAGHKYCLLGRLSSEVGWNHYDTIKELENKRKERAQAVYERKKQLSKLRAKAEKVAEEKLGSQLDVLAPVKY.

This sequence belongs to the universal ribosomal protein uL13 family.

The polypeptide is Large ribosomal subunit protein uL13z (RPL13AA) (Arabidopsis thaliana (Mouse-ear cress)).